A 192-amino-acid chain; its full sequence is Ribosomal RNA small subunit methyltransferase G (192 aa).

S-adenosyl-L-methionine is bound by residues glycine 63, leucine 68, 112–113 (IE), and arginine 125.

The protein belongs to the methyltransferase superfamily. RNA methyltransferase RsmG family.

The protein localises to the cytoplasm. The enzyme catalyses guanosine(527) in 16S rRNA + S-adenosyl-L-methionine = N(7)-methylguanosine(527) in 16S rRNA + S-adenosyl-L-homocysteine. Specifically methylates the N7 position of guanine in position 527 of 16S rRNA. In Rickettsia africae (strain ESF-5), this protein is Ribosomal RNA small subunit methyltransferase G.